We begin with the raw amino-acid sequence, 329 residues long: DNA-directed RNA polymerase subunit alpha (329 aa).

The interval 1–231 (MQTTLLKPKT…EQLAVFAQLE (231 aa)) is alpha N-terminal domain (alpha-NTD). An alpha C-terminal domain (alpha-CTD) region spans residues 249–329 (FDPILLRPVD…SWPPAGLDKR (81 aa)).

It belongs to the RNA polymerase alpha chain family. As to quaternary structure, homodimer. The RNAP catalytic core consists of 2 alpha, 1 beta, 1 beta' and 1 omega subunit. When a sigma factor is associated with the core the holoenzyme is formed, which can initiate transcription.

It catalyses the reaction RNA(n) + a ribonucleoside 5'-triphosphate = RNA(n+1) + diphosphate. Its function is as follows. DNA-dependent RNA polymerase catalyzes the transcription of DNA into RNA using the four ribonucleoside triphosphates as substrates. In Variovorax paradoxus (strain S110), this protein is DNA-directed RNA polymerase subunit alpha.